We begin with the raw amino-acid sequence, 426 residues long: 3-phosphoshikimate 1-carboxyvinyltransferase (426 aa).

3-phosphoshikimate-binding residues include Lys22, Ser23, and Arg27. Lys22 contacts phosphoenolpyruvate. 2 residues coordinate phosphoenolpyruvate: Gly96 and Arg124. Ser170, Ser171, Gln172, Ser198, Asp314, Asn337, and Lys341 together coordinate 3-phosphoshikimate. Gln172 contacts phosphoenolpyruvate. The Proton acceptor role is filled by Asp314. Phosphoenolpyruvate-binding residues include Arg345, Arg387, and Lys412.

The protein belongs to the EPSP synthase family. As to quaternary structure, monomer.

The protein localises to the cytoplasm. The catalysed reaction is 3-phosphoshikimate + phosphoenolpyruvate = 5-O-(1-carboxyvinyl)-3-phosphoshikimate + phosphate. The protein operates within metabolic intermediate biosynthesis; chorismate biosynthesis; chorismate from D-erythrose 4-phosphate and phosphoenolpyruvate: step 6/7. Functionally, catalyzes the transfer of the enolpyruvyl moiety of phosphoenolpyruvate (PEP) to the 5-hydroxyl of shikimate-3-phosphate (S3P) to produce enolpyruvyl shikimate-3-phosphate and inorganic phosphate. This is 3-phosphoshikimate 1-carboxyvinyltransferase from Shewanella pealeana (strain ATCC 700345 / ANG-SQ1).